Reading from the N-terminus, the 625-residue chain is Beta-galactosidase large subunit (625 aa).

The active-site Proton donor is glutamate 465. Residue glutamate 533 is the Nucleophile of the active site.

Belongs to the glycosyl hydrolase 2 family. In terms of assembly, heterodimer of a large (LacL) and a small subunit (LacM).

The catalysed reaction is Hydrolysis of terminal non-reducing beta-D-galactose residues in beta-D-galactosides.. Its function is as follows. Component of a beta-galactosidase. This is Beta-galactosidase large subunit from Latilactobacillus sakei (Lactobacillus sakei).